The sequence spans 34 residues: Non-cysteinic peptide Bs 10 (34 aa).

The interval 1-34 (VTMGYIKDGDGKKIAKKKNKNGRKHVEIDLNKVG) is disordered. Positions 14–23 (IAKKKNKNGR) are enriched in basic residues. Positions 24–34 (KHVEIDLNKVG) are enriched in basic and acidic residues.

As to expression, expressed by the venom gland.

The protein localises to the secreted. This chain is Non-cysteinic peptide Bs 10, found in Hottentotta tamulus sindicus (Scorpion).